A 180-amino-acid chain; its full sequence is Vacuolar ATPase assembly protein VMA22 (180 aa).

The stretch at 4-38 forms a coiled coil; sequence QALREELDSKCLQLLSDLEELEAKRAALNARVEEG. The disordered stretch occupies residues 90-113; that stretch reads TPEEVGPSEASLRRRKGPTKTKEL.

As to quaternary structure, accessory component of the multisubunit proton-transporting vacuolar (V)-ATPase protein pump. In terms of tissue distribution, predominantly expressed in the heart, liver, kidney and testis and at lower levels in the brain and lung. Undetectable in the spleen and muscles.

The protein localises to the endosome. The protein resides in the lysosome. It is found in the endoplasmic reticulum-Golgi intermediate compartment. Its subcellular location is the cytoplasmic vesicle. It localises to the COPI-coated vesicle. The protein localises to the endoplasmic reticulum. Its function is as follows. Accessory component of the proton-transporting vacuolar (V)-ATPase protein pump involved in intracellular iron homeostasis. In aerobic conditions, required for intracellular iron homeostasis, thus triggering the activity of Fe(2+) prolyl hydroxylase (PHD) enzymes, and leading to HIF1A hydroxylation and subsequent proteasomal degradation. Necessary for endolysosomal acidification and lysosomal degradation. May be involved in Golgi homeostasis. The sequence is that of Vacuolar ATPase assembly protein VMA22 (Vma22) from Mus musculus (Mouse).